The following is a 345-amino-acid chain: Papain (345 aa).

A signal peptide spans methionine 1–phenylalanine 18. Residues valine 19–asparagine 133 constitute a propeptide, activation peptide. Intrachain disulfides connect cysteine 155/cysteine 196, cysteine 189/cysteine 228, and cysteine 286/cysteine 333. Cysteine 158 is a catalytic residue. Residue cysteine 158 coordinates E64. Residue cysteine 158 participates in leupeptin binding. Residues histidine 292 and asparagine 308 contribute to the active site.

Belongs to the peptidase C1 family.

It carries out the reaction Hydrolysis of proteins with broad specificity for peptide bonds, but preference for an amino acid bearing a large hydrophobic side chain at the P2 position. Does not accept Val in P1'.. With respect to regulation, repressed by the active-site-directed cysteine protease inhibitor E64 (L-trans-epoxysuccinyl-leucylamide-(4-guanido)-butane) produced by Aspergillus japonicus. Inhibited by the inhibitor of cysteine proteases from Trypanosoma brucei (TbICP, rhodesain) and Colocasia esculenta cv. Kaohsiung no. 1 (CeCPI, tarocystatin). Repressed by leupeptin, a peptidic cysteine, serine and threonine protease inhibitor. Functionally, cysteine proteinase with a high level of diversity in substrate specificity, an amino acid bearing a large hydrophobic side chain at the P2 position is preferred. This Carica papaya (Papaya) protein is Papain.